The primary structure comprises 314 residues: Porphobilinogen deaminase (314 aa).

At Cys243 the chain carries S-(dipyrrolylmethanemethyl)cysteine.

The protein belongs to the HMBS family. Monomer. Requires dipyrromethane as cofactor.

It carries out the reaction 4 porphobilinogen + H2O = hydroxymethylbilane + 4 NH4(+). It participates in porphyrin-containing compound metabolism; protoporphyrin-IX biosynthesis; coproporphyrinogen-III from 5-aminolevulinate: step 2/4. Its function is as follows. Tetrapolymerization of the monopyrrole PBG into the hydroxymethylbilane pre-uroporphyrinogen in several discrete steps. The polypeptide is Porphobilinogen deaminase (Bordetella bronchiseptica (strain ATCC BAA-588 / NCTC 13252 / RB50) (Alcaligenes bronchisepticus)).